The chain runs to 400 residues: Cell division protein FtsZ 2 (400 aa).

Positions 1–16 (MQDIVREAMERDEAER) are enriched in basic and acidic residues. The tract at residues 1 to 30 (MQDIVREAMERDEAERQTQSSLEDSDDQFG) is disordered. GTP-binding positions include 41 to 45 (GAGNN), 128 to 130 (GTG), glutamate 159, arginine 162, and aspartate 205. Residues 338-400 (VLGPSTQKQA…EKNNGLDVIR (63 aa)) form a disordered region. A compositionally biased stretch (low complexity) spans 352 to 364 (QSIQSRESQQQHS). A compositionally biased stretch (polar residues) spans 365 to 382 (GSEFDSSERAQTAQSGTW). The span at 385–400 (GGRDEVEKNNGLDVIR) shows a compositional bias: basic and acidic residues.

Belongs to the FtsZ family. In terms of assembly, homodimer. Polymerizes to form a dynamic ring structure in a strictly GTP-dependent manner. Interacts directly with several other division proteins. Interacts with SepF.

The protein localises to the cytoplasm. Its function is as follows. Essential cell division protein that forms a contractile ring structure (Z ring) at the future cell division site. The regulation of the ring assembly controls the timing and the location of cell division. One of the functions of the FtsZ ring is to recruit other cell division proteins to the septum to produce a new cell wall between the dividing cells. Binds GTP and shows GTPase activity. Required for division ring constriction. The protein is Cell division protein FtsZ 2 of Haloferax volcanii (strain ATCC 29605 / DSM 3757 / JCM 8879 / NBRC 14742 / NCIMB 2012 / VKM B-1768 / DS2) (Halobacterium volcanii).